Reading from the N-terminus, the 750-residue chain is Xylosyl- and glucuronyltransferase LARGE2s (750 aa).

The Cytoplasmic portion of the chain corresponds to 1–10; it reads MLCPCRGKLK. A helical; Signal-anchor for type II membrane protein transmembrane segment spans residues 11 to 31; sequence LLVVSLSFVILFTWLYLLVGN. Over 32 to 750 the chain is Lumenal; it reads SENGRSLLLS…LKYLTAQRNI (719 aa). N-linked (GlcNAc...) asparagine glycans are attached at residues asparagine 116, asparagine 142, and asparagine 228. A xylosyltransferase activity region spans residues 132 to 407; that stretch reads LHVACVCAGH…FLEYDGNLLR (276 aa). Residues aspartate 236 and aspartate 238 each coordinate Mn(2+). A glycan (N-linked (GlcNAc...) asparagine) is linked at asparagine 266. Residues 408–750 form a glucuronyltransferase activity region; sequence RELFGCPSQA…LKYLTAQRNI (343 aa). Positions 557 and 559 each coordinate Mn(2+).

This sequence in the C-terminal section; belongs to the glycosyltransferase 49 family. The protein in the N-terminal section; belongs to the glycosyltransferase 8 family. It depends on Mn(2+) as a cofactor.

It localises to the golgi apparatus membrane. The catalysed reaction is 3-O-[beta-D-GlcA-(1-&gt;3)-beta-D-Xyl-(1-&gt;4)-Rib-ol-P-Rib-ol-P-3-beta-D-GalNAc-(1-&gt;3)-beta-D-GlcNAc-(1-&gt;4)-(O-6-P-alpha-D-Man)]-Thr-[protein] + UDP-alpha-D-xylose = 3-O-[alpha-D-Xyl-(1-&gt;3)-beta-D-GlcA-(1-&gt;4)-beta-D-Xyl-(1-&gt;4)-Rib-ol-P-Rib-ol-P-3-beta-D-GalNAc-(1-&gt;3)-beta-D-GlcNAc-(1-&gt;4)-(O-6-P-alpha-D-Man)]-Thr-[protein] + UDP + H(+). The enzyme catalyses 3-O-{(1-&gt;[3)-alpha-D-Xyl-(1-&gt;3)-beta-D-GlcA-(1-&gt;](n)-4)-beta-D-Xyl-(1-&gt;4)-Rib-ol-P-Rib-ol-P-3-beta-D-GalNAc-(1-&gt;3)-beta-D-GlcNAc-(1-&gt;4)-O-6-P-alpha-D-Man}-L-Thr-[protein] + UDP-alpha-D-glucuronate = 3-O-{beta-D-GlcA-(1-&gt;[3)-alpha-D-Xyl-(1-&gt;3)-beta-D-GlcA-(1-&gt;](n)-4)-beta-D-Xyl-(1-&gt;4)-Rib-ol-P-Rib-ol-P-3-beta-D-GalNAc-(1-&gt;3)-beta-D-GlcNAc-(1-&gt;4)-O-6-P-alpha-D-Man}-L-Thr-[protein] + UDP + H(+). It carries out the reaction 3-O-{beta-D-GlcA-(1-&gt;[3)-alpha-D-Xyl-(1-&gt;3)-beta-D-GlcA-(1-&gt;](n)-4)-beta-D-Xyl-(1-&gt;4)-Rib-ol-P-Rib-ol-P-3-beta-D-GalNAc-(1-&gt;3)-beta-D-GlcNAc-(1-&gt;4)-O-6-P-alpha-D-Man}-L-Thr-[protein] + UDP-alpha-D-xylose = 3-O-{(1-&gt;[3)-alpha-D-Xyl-(1-&gt;3)-beta-D-GlcA-(1-&gt;](n+1)-4)-beta-D-Xyl-(1-&gt;4)-Rib-ol-P-Rib-ol-P-3-beta-D-GalNAc-(1-&gt;3)-beta-D-GlcNAc-(1-&gt;4)-O-6-P-alpha-D-Man}-L-Thr-[protein] + UDP + H(+). It participates in protein modification; protein glycosylation. Bifunctional glycosyltransferase with both alpha-1,3-xylosyltransferase and beta-1,3-glucuronyltransferase activities involved in the maturation of alpha-dystroglycan (DAG1) by glycosylation leading to DAG1 binding to laminin G-like domain-containing extracellular proteins with high affinity and in a phosphorylated-O-mannosyl trisaccharide dependent manner. Elongates the glucuronyl-beta-1,4-xylose-beta disaccharide primer structure by adding repeating units [-3-Xylose-alpha-1,3-GlcA-beta-1-] to produce a heteropolysaccharide. Supports the maturation of DAG1 more effectively than LARGE1. In addition, can modify both heparan sulfate (HS)- and chondroitin/dermatan sulfate (CS/DS)-proteoglycans (PGs), namely GPC4, with a glycosaminoglycan (GAG)-like polysaccharide composed of xylose and glucuronic acid to confer laminin binding. In Danio rerio (Zebrafish), this protein is Xylosyl- and glucuronyltransferase LARGE2s.